Reading from the N-terminus, the 618-residue chain is UvrABC system protein C (618 aa).

The GIY-YIG domain occupies S19–V97. A UVR domain is found at Q208–I243.

Belongs to the UvrC family. Interacts with UvrB in an incision complex.

It is found in the cytoplasm. The UvrABC repair system catalyzes the recognition and processing of DNA lesions. UvrC both incises the 5' and 3' sides of the lesion. The N-terminal half is responsible for the 3' incision and the C-terminal half is responsible for the 5' incision. This chain is UvrABC system protein C, found in Legionella pneumophila (strain Lens).